The sequence spans 98 residues: MLTRFITDVSTRFNPFSAKAKAARLFLSFLPPNARSNGMNITTQLLPRNSTETPLLYVKFKDGKEMNLDVENMGIKSIVEEVDRHSRILQKQADLNDG.

The protein belongs to the mitochondrion-specific ribosomal protein mL53 family. Component of the mitochondrial large ribosomal subunit (mt-LSU). Mature N.crassa 74S mitochondrial ribosomes consist of a small (37S) and a large (54S) subunit. The 37S small subunit contains a 16S ribosomal RNA (16S mt-rRNA) and 32 different proteins. The 54S large subunit contains a 23S rRNA (23S mt-rRNA) and 42 different proteins.

It is found in the mitochondrion. Functionally, component of the mitochondrial ribosome (mitoribosome), a dedicated translation machinery responsible for the synthesis of mitochondrial genome-encoded proteins, including at least some of the essential transmembrane subunits of the mitochondrial respiratory chain. The mitoribosomes are attached to the mitochondrial inner membrane and translation products are cotranslationally integrated into the membrane. The chain is Large ribosomal subunit protein mL53 (mrpl44) from Neurospora crassa (strain ATCC 24698 / 74-OR23-1A / CBS 708.71 / DSM 1257 / FGSC 987).